The following is a 702-amino-acid chain: Ferrioxamine B receptor (702 aa).

The first 30 residues, 1–30 (MPLEMFMFATTRMALLIGGAIGGATFPLFA), serve as a signal peptide directing secretion. In terms of domain architecture, TBDR plug spans 55–168 (PDIETPQSVS…PGGIVALTSR (114 aa)). One can recognise a TBDR beta-barrel domain in the interval 173–702 (DAGGEVKLFA…SIVGSVSWAF (530 aa)).

This sequence belongs to the TonB-dependent receptor family.

Its subcellular location is the cell outer membrane. Its function is as follows. Ferrioxamine binding and uptake, in association with the TonB protein. May play a role in intestinal colonization. In Salmonella typhimurium (strain SL1344), this protein is Ferrioxamine B receptor (foxA).